Consider the following 262-residue polypeptide: tRNA pseudouridine synthase A (262 aa).

Asp51 (nucleophile) is an active-site residue. Tyr109 lines the substrate pocket.

Belongs to the tRNA pseudouridine synthase TruA family. As to quaternary structure, homodimer.

The enzyme catalyses uridine(38/39/40) in tRNA = pseudouridine(38/39/40) in tRNA. Its function is as follows. Formation of pseudouridine at positions 38, 39 and 40 in the anticodon stem and loop of transfer RNAs. This Aliivibrio fischeri (strain ATCC 700601 / ES114) (Vibrio fischeri) protein is tRNA pseudouridine synthase A.